The sequence spans 382 residues: U11/U12 small nuclear ribonucleoprotein 59 kDa protein (382 aa).

Positions 31-63 (NTKNITDQLKQLQDTLNLAKSMEKELEALKMIK) form a coiled coil. Residues 274 to 297 (SEENTTLTTSNKTNNDTDKDSNTN) form a disordered region. A compositionally biased stretch (low complexity) spans 277 to 287 (NTTLTTSNKTN).

In terms of assembly, component of the U11/U12 snRNPs that are part of the U12-type spliceosome.

The protein localises to the nucleus. The chain is U11/U12 small nuclear ribonucleoprotein 59 kDa protein (SNRNP59) from Arabidopsis thaliana (Mouse-ear cress).